Here is a 398-residue protein sequence, read N- to C-terminus: Stimulator of interferon genes protein (398 aa).

The Cytoplasmic portion of the chain corresponds to 1–16; that stretch reads MSVMGEDALVPRARSR. Residues 17–37 traverse the membrane as a helical segment; that stretch reads LPVMCAAGLGFLTLAVAWLLD. The Lumenal portion of the chain corresponds to 38-44; that stretch reads SDKFSER. Residues 45 to 65 form a helical membrane-spanning segment; the sequence is AGIIAFGLMLERFIYCICLLA. The Cytoplasmic portion of the chain corresponds to 66 to 91; the sequence is EELLFHSRQRYHGRMSEIFRACFRGS. Residues 92–112 traverse the membrane as a helical segment; it reads GILGMCAIFLMLMLGGVSFSV. The Lumenal portion of the chain corresponds to 113-120; it reads KQWSHFNL. Residues 121–141 form a helical membrane-spanning segment; that stretch reads MCAGYMLLNSLGVLGPAPVEI. Residues 142 to 398 are Cytoplasmic-facing; that stretch reads SEICEAKKMN…FNPSSAMKQN (257 aa). The cyclic dinucleotide-binding domain (CBD) stretch occupies residues 150–331; the sequence is MNVAHGLAWS…QNLKQQDGEI (182 aa). Positions 159, 164, 230, and 254 each coordinate 2',3'-cGAMP. 3',3'-c-di-GMP contacts are provided by residues S159, Y164, 230–233, and T254; that span reads RSYT. Residues 375–398 are disordered; it reads PQSLRSEPVETTDYFNPSSAMKQN. Residues 387–398 are compositionally biased toward polar residues; it reads DYFNPSSAMKQN.

The protein belongs to the STING family. In terms of assembly, homodimer; forms a homodimer in absence of cyclic nucleotide (c-di-GMP or cGAMP). Homotetramer; in presence of cyclic nucleotide (c-di-GMP or cGAMP), forms tetramers and higher-order oligomers through side-by-side packing. Interacts (when phosphorylated) with irf3; following activation and phosphorylation by tbk1, recruits irf3. In terms of processing, phosphorylation by TBK1 leads to activation and production of IFN-beta. Following cyclic nucleotide (c-di-GMP or cGAMP)-binding, activation and translocation from the endoplasmic reticulum, STING1 is phosphorylated by tbk1, leading to recruitment of the transcription factor irf3 to induce type-I interferons and other cytokines.

Its subcellular location is the endoplasmic reticulum membrane. The protein localises to the cytoplasm. The protein resides in the perinuclear region. It localises to the endoplasmic reticulum-Golgi intermediate compartment membrane. It is found in the golgi apparatus membrane. Its subcellular location is the cytoplasmic vesicle. The protein localises to the autophagosome membrane. It catalyses the reaction H(+)(in) = H(+)(out). Its function is as follows. Facilitator of innate immune signaling that acts as a sensor of cytosolic DNA from bacteria and viruses and promotes the production of type I interferon (IFN-alpha and IFN-beta). Innate immune response is triggered in response to non-CpG double-stranded DNA from viruses and bacteria delivered to the cytoplasm. Acts by binding cyclic dinucleotides: recognizes and binds cyclic di-GMP (c-di-GMP), a second messenger produced by bacteria, and cyclic GMP-AMP (cGAMP), a messenger produced by CGAS in response to DNA virus in the cytosol. Upon binding of c-di-GMP or cGAMP, STING1 oligomerizes and is able to activate both NF-kappa-B and irf3 transcription pathways to induce expression of type I interferon and exert a potent anti-viral state. Exhibits 2',3' phosphodiester linkage-specific ligand recognition: can bind both 2'-3' linked cGAMP and 3'-3' linked cGAMP but is preferentially activated by 2'-3' linked cGAMP. In addition to promote the production of type I interferons, plays a direct role in autophagy. Following cGAMP-binding, STING1 buds from the endoplasmic reticulum into COPII vesicles, which then form the endoplasmic reticulum-Golgi intermediate compartment (ERGIC). The ERGIC serves as the membrane source for LC3 lipidation, leading to formation of autophagosomes that target cytosolic DNA or DNA viruses for degradation by the lysosome. Promotes autophagy by acting as a proton channel that directs proton efflux from the Golgi to facilitate LC3 lipidation. The autophagy- and interferon-inducing activities can be uncoupled and autophagy induction is independent of TBK1 phosphorylation. The protein is Stimulator of interferon genes protein of Danio rerio (Zebrafish).